The following is a 365-amino-acid chain: Flagellar P-ring protein (365 aa).

The N-terminal stretch at 1–19 (MIKFLSALILLLVTTAAQA) is a signal peptide.

It belongs to the FlgI family. In terms of assembly, the basal body constitutes a major portion of the flagellar organelle and consists of four rings (L,P,S, and M) mounted on a central rod.

It is found in the periplasm. The protein resides in the bacterial flagellum basal body. Functionally, assembles around the rod to form the L-ring and probably protects the motor/basal body from shearing forces during rotation. The protein is Flagellar P-ring protein of Shigella boydii serotype 4 (strain Sb227).